Consider the following 274-residue polypeptide: MTKVEYKHTHIAAKKKLGQNFLLDKNIPRKIVRESGIKEGDLVLEIGPGFGALSTAILEVMPSFTAIEKDPELARFIREEHPEINLIEGDFLKVPLEPLTGSGKLAVLGNIPYSITSPILFRLLDNRHLIESATLMMQHEVAQRITAVPGTKEYGILAVQMQAFCDVKYLFKVGRAVFKPRPEVDSAVIRLVPKAQNPVEDSEGFRTFVRRAFHQRRKTLWNNLKEYYNTSEVPAETLKLRAEALTVEGLIELFEKLTPIDHALNDPETRNGIE.

Residues N20, L22, G47, E68, D90, and N110 each contribute to the S-adenosyl-L-methionine site.

Belongs to the class I-like SAM-binding methyltransferase superfamily. rRNA adenine N(6)-methyltransferase family. RsmA subfamily.

It localises to the cytoplasm. It catalyses the reaction adenosine(1518)/adenosine(1519) in 16S rRNA + 4 S-adenosyl-L-methionine = N(6)-dimethyladenosine(1518)/N(6)-dimethyladenosine(1519) in 16S rRNA + 4 S-adenosyl-L-homocysteine + 4 H(+). In terms of biological role, specifically dimethylates two adjacent adenosines (A1518 and A1519) in the loop of a conserved hairpin near the 3'-end of 16S rRNA in the 30S particle. May play a critical role in biogenesis of 30S subunits. The polypeptide is Ribosomal RNA small subunit methyltransferase A (Chlorobaculum parvum (strain DSM 263 / NCIMB 8327) (Chlorobium vibrioforme subsp. thiosulfatophilum)).